The primary structure comprises 911 residues: Translation initiation factor IF-2 (911 aa).

Basic and acidic residues-rich tracts occupy residues 80–94 and 101–113; these read LEEQ…EQQL and RPER…RTEV. Disordered regions lie at residues 80-142, 153-172, and 195-309; these read LEEQ…VSEP, VKSP…DVEG, and SSLG…KMRK. Residues 214 to 256 show a composition bias toward basic and acidic residues; it reads KEQADELKDEFDIKAKEGGKEREAGGESRKPVKKGSEETKKTT. Basic residues predominate over residues 262–272; the sequence is AKKKKGKKKKK. The segment covering 273–284 has biased composition (basic and acidic residues); that stretch reads PEVDEKTIEKNI. Residues 286 to 300 show a composition bias toward low complexity; that stretch reads STISGMDDTSGSGSS. Residues 408-578 enclose the tr-type G domain; the sequence is IRPPVVTIMG…LTEAEIRELK (171 aa). The G1 stretch occupies residues 417 to 424; the sequence is GHVDHGKT. 417–424 is a binding site for GTP; it reads GHVDHGKT. Positions 442–446 are G2; that stretch reads GITQH. Positions 464-467 are G3; that stretch reads DTPG. GTP contacts are provided by residues 464–468 and 518–521; these read DTPGH and NKID. Residues 518–521 form a G4 region; the sequence is NKID. The segment at 554–556 is G5; sequence SAK.

This sequence belongs to the TRAFAC class translation factor GTPase superfamily. Classic translation factor GTPase family. IF-2 subfamily.

It is found in the cytoplasm. In terms of biological role, one of the essential components for the initiation of protein synthesis. Protects formylmethionyl-tRNA from spontaneous hydrolysis and promotes its binding to the 30S ribosomal subunits. Also involved in the hydrolysis of GTP during the formation of the 70S ribosomal complex. This Chlorobium phaeobacteroides (strain BS1) protein is Translation initiation factor IF-2.